The following is a 127-amino-acid chain: UPF0102 protein Cpha266_0037 (127 aa).

The protein belongs to the UPF0102 family.

In Chlorobium phaeobacteroides (strain DSM 266 / SMG 266 / 2430), this protein is UPF0102 protein Cpha266_0037.